Here is a 520-residue protein sequence, read N- to C-terminus: Ribonuclease Y (520 aa).

Residues 1-21 traverse the membrane as a helical segment; sequence MDIITIIIAVIAGIGGGFGIS. Residues 210–276 form the KH domain; that stretch reads CVSVFNIESD…RLALHKLVTD (67 aa). Residues 336–429 enclose the HD domain; sequence LLQHSREVSK…VQVCDAISGA (94 aa).

The protein belongs to the RNase Y family.

Its subcellular location is the cell membrane. Its function is as follows. Endoribonuclease that initiates mRNA decay. This Flavobacterium psychrophilum (strain ATCC 49511 / DSM 21280 / CIP 103535 / JIP02/86) protein is Ribonuclease Y.